Here is a 481-residue protein sequence, read N- to C-terminus: Argininosuccinate synthase (481 aa).

Residues 17-25 (AFSGGLDTS) and alanine 43 each bind ATP. Tyrosine 99 is an L-citrulline binding site. Glycine 129 and threonine 131 together coordinate ATP. L-aspartate is bound by residues threonine 131, asparagine 135, and aspartate 136. L-citrulline is bound at residue asparagine 135. Aspartate 136 lines the ATP pocket. Residues arginine 139 and serine 192 each coordinate L-citrulline. Aspartate 194 is an ATP binding site. 3 residues coordinate L-citrulline: threonine 201, glutamate 203, and glutamate 280.

This sequence belongs to the argininosuccinate synthase family. Type 2 subfamily. Homotetramer.

It localises to the cytoplasm. The enzyme catalyses L-citrulline + L-aspartate + ATP = 2-(N(omega)-L-arginino)succinate + AMP + diphosphate + H(+). The protein operates within amino-acid biosynthesis; L-arginine biosynthesis; L-arginine from L-ornithine and carbamoyl phosphate: step 2/3. The chain is Argininosuccinate synthase (argG) from Streptomyces coelicolor (strain ATCC BAA-471 / A3(2) / M145).